The chain runs to 1165 residues: Protein hsr-9 (1165 aa).

Disordered regions lie at residues 1–26, 70–578, 608–713, and 874–913; these read MASS…PTTT, AEDE…TEME, KYSM…IPLK, and TRAR…EEEE. Low complexity predominate over residues 16–26; the sequence is TVTQTSLPTTT. Composition is skewed to basic and acidic residues over residues 98–114, 123–140, and 149–162; these read KDAK…KSES, TFEK…KLDI, and DTEK…KVVG. 3 stretches are compositionally biased toward acidic residues: residues 163 to 179, 211 to 230, and 280 to 289; these read DEDE…DEDE, EKEE…EVEV, and GESEANEENQ. Over residues 306–317 the composition is skewed to polar residues; that stretch reads ATVSSTPSSNTP. The span at 397–408 shows a compositional bias: basic and acidic residues; sequence NTEHPTEEETPK. Residues 415 to 431 show a composition bias toward low complexity; sequence SAASSSATSSAVPTPRS. The segment covering 446 to 461 has biased composition (basic and acidic residues); sequence LQEKETEDPTKTHDTN. Over residues 533–543 the composition is skewed to acidic residues; the sequence is DPIEEADETIE. Residues 554–563 show a composition bias toward low complexity; that stretch reads AAKSAPSSSK. Composition is skewed to basic and acidic residues over residues 662–671 and 694–708; these read KKEEEHHEND and SEAS…KKEP. One can recognise a BRCT domain in the interval 923–1028; that stretch reads IGKNIFTGKV…KCVDYTDYVL (106 aa).

In terms of tissue distribution, expressed in germ cells.

It is found in the nucleus. Functionally, may have a role in DNA double-strand break repair following gamma-irradiation. This is Protein hsr-9 from Caenorhabditis elegans.